Consider the following 255-residue polypeptide: tRNA (guanine-N(1)-)-methyltransferase (255 aa).

Residues Gly-117 and Ile-137–Leu-142 each bind S-adenosyl-L-methionine.

It belongs to the RNA methyltransferase TrmD family. In terms of assembly, homodimer.

It is found in the cytoplasm. It catalyses the reaction guanosine(37) in tRNA + S-adenosyl-L-methionine = N(1)-methylguanosine(37) in tRNA + S-adenosyl-L-homocysteine + H(+). Functionally, specifically methylates guanosine-37 in various tRNAs. This Chromobacterium violaceum (strain ATCC 12472 / DSM 30191 / JCM 1249 / CCUG 213 / NBRC 12614 / NCIMB 9131 / NCTC 9757 / MK) protein is tRNA (guanine-N(1)-)-methyltransferase.